The sequence spans 484 residues: Aspartyl/glutamyl-tRNA(Asn/Gln) amidotransferase subunit B (484 aa).

The protein belongs to the GatB/GatE family. GatB subfamily. Heterotrimer of A, B and C subunits.

The enzyme catalyses L-glutamyl-tRNA(Gln) + L-glutamine + ATP + H2O = L-glutaminyl-tRNA(Gln) + L-glutamate + ADP + phosphate + H(+). It catalyses the reaction L-aspartyl-tRNA(Asn) + L-glutamine + ATP + H2O = L-asparaginyl-tRNA(Asn) + L-glutamate + ADP + phosphate + 2 H(+). Allows the formation of correctly charged Asn-tRNA(Asn) or Gln-tRNA(Gln) through the transamidation of misacylated Asp-tRNA(Asn) or Glu-tRNA(Gln) in organisms which lack either or both of asparaginyl-tRNA or glutaminyl-tRNA synthetases. The reaction takes place in the presence of glutamine and ATP through an activated phospho-Asp-tRNA(Asn) or phospho-Glu-tRNA(Gln). This Anaeromyxobacter dehalogenans (strain 2CP-C) protein is Aspartyl/glutamyl-tRNA(Asn/Gln) amidotransferase subunit B.